We begin with the raw amino-acid sequence, 88 residues long: MVKLRLKRCGRKQRAVYRIVAIDVRSRREGKDLRKVGFYDPIKNQTYLNVPAILYFLEKGAQPTGTVQDILKKAEVFKELRPNQPKFN.

Belongs to the bacterial ribosomal protein bS16 family.

It localises to the plastid. Its subcellular location is the chloroplast. This chain is Small ribosomal subunit protein bS16c, found in Atropa belladonna (Belladonna).